The following is an 87-amino-acid chain: UPF0367 protein Pro_0144 (87 aa).

The protein belongs to the UPF0367 family.

The sequence is that of UPF0367 protein Pro_0144 from Prochlorococcus marinus (strain SARG / CCMP1375 / SS120).